We begin with the raw amino-acid sequence, 182 residues long: Large ribosomal subunit protein bL25 (182 aa).

This sequence belongs to the bacterial ribosomal protein bL25 family. CTC subfamily. Part of the 50S ribosomal subunit; part of the 5S rRNA/L5/L18/L25 subcomplex. Contacts the 5S rRNA. Binds to the 5S rRNA independently of L5 and L18.

In terms of biological role, this is one of the proteins that binds to the 5S RNA in the ribosome where it forms part of the central protuberance. This Borreliella afzelii (strain PKo) (Borrelia afzelii) protein is Large ribosomal subunit protein bL25.